Reading from the N-terminus, the 174-residue chain is Large ribosomal subunit protein uL10 (174 aa).

Belongs to the universal ribosomal protein uL10 family. In terms of assembly, part of the ribosomal stalk of the 50S ribosomal subunit. The N-terminus interacts with L11 and the large rRNA to form the base of the stalk. The C-terminus forms an elongated spine to which L12 dimers bind in a sequential fashion forming a multimeric L10(L12)X complex.

Functionally, forms part of the ribosomal stalk, playing a central role in the interaction of the ribosome with GTP-bound translation factors. In Anaeromyxobacter sp. (strain K), this protein is Large ribosomal subunit protein uL10.